A 213-amino-acid polypeptide reads, in one-letter code: Redox-sensing transcriptional repressor Rex (213 aa).

The segment at residues 16–55 is a DNA-binding region (H-T-H motif); that stretch reads IYYRYLRLLSNSGKNRVSSTELAEAVKVDSATIRRDFSYF. 90-95 is a binding site for NAD(+); sequence GVGNLG.

This sequence belongs to the transcriptional regulatory Rex family. As to quaternary structure, homodimer.

Its subcellular location is the cytoplasm. In terms of biological role, modulates transcription in response to changes in cellular NADH/NAD(+) redox state. The chain is Redox-sensing transcriptional repressor Rex from Ligilactobacillus salivarius (strain UCC118) (Lactobacillus salivarius).